We begin with the raw amino-acid sequence, 224 residues long: Probable Brix domain-containing ribosomal biogenesis protein (224 aa).

Positions 1 to 196 constitute a Brix domain; the sequence is MMLITTSHRP…IWIMEDGRRW (196 aa).

In terms of biological role, probably involved in the biogenesis of the ribosome. The polypeptide is Probable Brix domain-containing ribosomal biogenesis protein (Pyrococcus abyssi (strain GE5 / Orsay)).